A 340-amino-acid polypeptide reads, in one-letter code: Nucleoid-associated protein PSPA7_4451 (340 aa).

It belongs to the YejK family.

It localises to the cytoplasm. The protein localises to the nucleoid. In Pseudomonas paraeruginosa (strain DSM 24068 / PA7) (Pseudomonas aeruginosa (strain PA7)), this protein is Nucleoid-associated protein PSPA7_4451.